We begin with the raw amino-acid sequence, 213 residues long: NADH-quinone oxidoreductase subunit I (213 aa).

4Fe-4S ferredoxin-type domains follow at residues 74–103 (RFIE…METS) and 113–142 (GNYS…HGIE). The [4Fe-4S] cluster site is built by Cys83, Cys86, Cys89, Cys93, Cys122, Cys125, Cys128, and Cys132.

Belongs to the complex I 23 kDa subunit family. NDH-1 is composed of 14 different subunits. Subunits NuoA, H, J, K, L, M, N constitute the membrane sector of the complex. [4Fe-4S] cluster serves as cofactor.

It is found in the cell inner membrane. The catalysed reaction is a quinone + NADH + 5 H(+)(in) = a quinol + NAD(+) + 4 H(+)(out). Functionally, NDH-1 shuttles electrons from NADH, via FMN and iron-sulfur (Fe-S) centers, to quinones in the respiratory chain. The immediate electron acceptor for the enzyme in this species is believed to be ubiquinone. Couples the redox reaction to proton translocation (for every two electrons transferred, four hydrogen ions are translocated across the cytoplasmic membrane), and thus conserves the redox energy in a proton gradient. This chain is NADH-quinone oxidoreductase subunit I, found in Campylobacter jejuni subsp. doylei (strain ATCC BAA-1458 / RM4099 / 269.97).